Here is a 388-residue protein sequence, read N- to C-terminus: Formate-dependent phosphoribosylglycinamide formyltransferase (388 aa).

N(1)-(5-phospho-beta-D-ribosyl)glycinamide contacts are provided by residues 15–16 (EL) and Glu-75. ATP-binding positions include Arg-107, Lys-148, 153–158 (SSGKGQ), 188–191 (EEFL), and Glu-196. Residues 112-302 (DLAAGELALR…EFELHLRAVL (191 aa)) form the ATP-grasp domain. The Mg(2+) site is built by Glu-261 and Glu-273. N(1)-(5-phospho-beta-D-ribosyl)glycinamide is bound by residues Asp-280, Lys-350, and 357–358 (RR).

It belongs to the PurK/PurT family. Homodimer.

It carries out the reaction N(1)-(5-phospho-beta-D-ribosyl)glycinamide + formate + ATP = N(2)-formyl-N(1)-(5-phospho-beta-D-ribosyl)glycinamide + ADP + phosphate + H(+). The protein operates within purine metabolism; IMP biosynthesis via de novo pathway; N(2)-formyl-N(1)-(5-phospho-D-ribosyl)glycinamide from N(1)-(5-phospho-D-ribosyl)glycinamide (formate route): step 1/1. Involved in the de novo purine biosynthesis. Catalyzes the transfer of formate to 5-phospho-ribosyl-glycinamide (GAR), producing 5-phospho-ribosyl-N-formylglycinamide (FGAR). Formate is provided by PurU via hydrolysis of 10-formyl-tetrahydrofolate. In Parasynechococcus marenigrum (strain WH8102), this protein is Formate-dependent phosphoribosylglycinamide formyltransferase.